The following is a 246-amino-acid chain: 1-(5-phosphoribosyl)-5-[(5-phosphoribosylamino)methylideneamino] imidazole-4-carboxamide isomerase (246 aa).

Catalysis depends on Asp8, which acts as the Proton acceptor. Asp131 functions as the Proton donor in the catalytic mechanism.

This sequence belongs to the HisA/HisF family.

It is found in the cytoplasm. It carries out the reaction 1-(5-phospho-beta-D-ribosyl)-5-[(5-phospho-beta-D-ribosylamino)methylideneamino]imidazole-4-carboxamide = 5-[(5-phospho-1-deoxy-D-ribulos-1-ylimino)methylamino]-1-(5-phospho-beta-D-ribosyl)imidazole-4-carboxamide. It participates in amino-acid biosynthesis; L-histidine biosynthesis; L-histidine from 5-phospho-alpha-D-ribose 1-diphosphate: step 4/9. The protein is 1-(5-phosphoribosyl)-5-[(5-phosphoribosylamino)methylideneamino] imidazole-4-carboxamide isomerase of Delftia acidovorans (strain DSM 14801 / SPH-1).